Here is a 140-residue protein sequence, read N- to C-terminus: Calcitonin (140 aa).

An N-terminal signal peptide occupies residues 1–25 (MGFWKFSPFLPLSILVLYQVGIIQA). The propeptide occupies 26-81 (APFRSALESLPDPAVLPEEESRLLLAALVKDYVQMKVRALEQEQETGGASLDSPRA). Cys-84 and Cys-90 are disulfide-bonded. Position 115 is a proline amide (Pro-115). Residues 120 to 140 (VMARGLERDHGPHIGTSQDAY) constitute a propeptide that is removed on maturation.

This sequence belongs to the calcitonin family.

The protein localises to the secreted. Calcitonin is a peptide hormone that causes a rapid but short-lived drop in the level of calcium and phosphate in blood by promoting the incorporation of those ions in the bones. Calcitonin function is mediated by the calcitonin receptor/CALCR and the CALCR-RAMP2 (AMYR2) receptor complex. In Equus caballus (Horse), this protein is Calcitonin (CALCA).